We begin with the raw amino-acid sequence, 229 residues long: Secretory carrier-associated membrane protein 4 (229 aa).

Residues 1–39 (MSEKENNFPPLPKFIPVKPCFYQNFSDEIPVEHQVLVKR) lie on the Cytoplasmic side of the membrane. 4 consecutive transmembrane segments (helical) span residues 40 to 60 (IYRLWMFYCATLGVNLIACLA), 61 to 81 (WWIGGGSGTNFGLAFVWLLLF), 105 to 125 (FMAFFFIFGAQFVLTVIQAIG), and 149 to 169 (VVMLLPAIMFSVSAAMMAIAI). Residues 170–229 (MKVHRIYRGAGGSFQKAQTEWNTGTWRNPPSREAQYNNFSGNSLPEYPTVPSYPGSGQWP) lie on the Cytoplasmic side of the membrane. Thr194 carries the post-translational modification Phosphothreonine. Positions 208-229 (FSGNSLPEYPTVPSYPGSGQWP) are disordered.

It belongs to the SCAMP family.

Its subcellular location is the membrane. Probably involved in membrane protein trafficking. The protein is Secretory carrier-associated membrane protein 4 (SCAMP4) of Homo sapiens (Human).